Here is a 339-residue protein sequence, read N- to C-terminus: 4-amino-5-hydroxymethyl-2-methylpyrimidine phosphate synthase (339 aa).

K62 carries the N6-(pyridoxal phosphate)lysine modification. H66 is an active-site residue. A pyridoxal 5'-phosphate-binding site is contributed by 115–118 (GEFG). Residues 195–199 (CCCFC) carry the CCCFC; essential for catalytic activity, may be the site of iron coordination motif.

This sequence belongs to the NMT1/THI5 family. In terms of assembly, homodimer. Requires Fe(3+) as cofactor.

The catalysed reaction is N(6)-(pyridoxal phosphate)-L-lysyl-[4-amino-5-hydroxymethyl-2-methylpyrimidine phosphate synthase] + L-histidyl-[4-amino-5-hydroxymethyl-2-methylpyrimidine phosphate synthase] + 2 Fe(3+) + 4 H2O = L-lysyl-[4-amino-5-hydroxymethyl-2-methylpyrimidine phosphate synthase] + (2S)-2-amino-5-hydroxy-4-oxopentanoyl-[4-amino-5-hydroxymethyl-2-methylpyrimidine phosphate synthase] + 4-amino-2-methyl-5-(phosphooxymethyl)pyrimidine + 3-oxopropanoate + 2 Fe(2+) + 2 H(+). Its pathway is cofactor biosynthesis; thiamine diphosphate biosynthesis. Its function is as follows. Responsible for the formation of the pyrimidine heterocycle in the thiamine biosynthesis pathway. Catalyzes the formation of hydroxymethylpyrimidine phosphate (HMP-P) from histidine and pyridoxal phosphate (PLP). The protein uses PLP and the active site histidine to form HMP-P, generating an inactive enzyme. The enzyme can only undergo a single turnover, which suggests it is a suicide enzyme. The protein is 4-amino-5-hydroxymethyl-2-methylpyrimidine phosphate synthase of Candida albicans (strain WO-1) (Yeast).